The chain runs to 152 residues: Proteolipid protein 2 (152 aa).

The MARVEL domain maps to 19-138; sequence FSRTKKGILL…DAYITFPLKQ (120 aa). 4 helical membrane-spanning segments follow: residues 25 to 45, 48 to 68, 85 to 105, and 112 to 132; these read GILLFAEIILCLVILICFSAS, SAYSSLSVIEMICAAVLLVFY, DFFRSLIATILYLITSIVVLV, and RVVAGILGLLATLLFGYDAYI.

The protein resides in the membrane. Its function is as follows. May play a role in cell differentiation in the intestinal epithelium. The polypeptide is Proteolipid protein 2 (Plp2) (Mus musculus (Mouse)).